A 103-amino-acid chain; its full sequence is Large ribosomal subunit protein uL24 (103 aa).

This sequence belongs to the universal ribosomal protein uL24 family. In terms of assembly, part of the 50S ribosomal subunit.

Its function is as follows. One of two assembly initiator proteins, it binds directly to the 5'-end of the 23S rRNA, where it nucleates assembly of the 50S subunit. In terms of biological role, one of the proteins that surrounds the polypeptide exit tunnel on the outside of the subunit. The polypeptide is Large ribosomal subunit protein uL24 (Exiguobacterium sibiricum (strain DSM 17290 / CCUG 55495 / CIP 109462 / JCM 13490 / 255-15)).